Consider the following 60-residue polypeptide: U20-myrmicitoxin-Mri1a (60 aa).

The signal sequence occupies residues M1–G24. Residues E25–A34 constitute a propeptide that is removed on maturation.

Belongs to the formicidae venom precursor-01 superfamily. In terms of tissue distribution, expressed by the venom gland.

Its subcellular location is the secreted. Induces paralysis 5 minutes after injection into blowflies (L.caesar), and then death within 24 hours. May have antimicrobial properties, like most ant linear peptides. The protein is U20-myrmicitoxin-Mri1a of Manica rubida (European giant red ant).